Here is a 225-residue protein sequence, read N- to C-terminus: MDKRISIAIDGPAAAGKSTVAKVVAKKLSYVYIDTGAMYRTITYAALEQKVDIENEEQLMEVVKNVKIEFQQGENTQLVFLNGQDVSEVIRTPEVTNRVSIVAKHRLVREEMVRRQQELAEKGGVVMDGRDIGTHVLPDAEVKIFMLASVEERAERRHLENMNKGFDSNLEQLKEEIAQRDKLDSEREVSPLKKADDALELDTTSLSIEEVVQKIMGIVSGVFAK.

11–19 (GPAAAGKST) provides a ligand contact to ATP.

It belongs to the cytidylate kinase family. Type 1 subfamily.

The protein resides in the cytoplasm. The enzyme catalyses CMP + ATP = CDP + ADP. It carries out the reaction dCMP + ATP = dCDP + ADP. The sequence is that of Cytidylate kinase from Bacillus cereus (strain AH187).